A 721-amino-acid chain; its full sequence is Catalase-peroxidase (721 aa).

The tryptophyl-tyrosyl-methioninium (Trp-Tyr) (with M-238) cross-link spans 89-212 (WHSAGTYRTG…LAAVQMGLIY (124 aa)). Residue His-90 is the Proton acceptor of the active site. The segment at residues 212–238 (YVNPEGPNGDPDPFAAAVDIRETFARM) is a cross-link (tryptophyl-tyrosyl-methioninium (Tyr-Met) (with W-89)). His-253 provides a ligand contact to heme b.

The protein belongs to the peroxidase family. Peroxidase/catalase subfamily. As to quaternary structure, homodimer or homotetramer. It depends on heme b as a cofactor. Post-translationally, formation of the three residue Trp-Tyr-Met cross-link is important for the catalase, but not the peroxidase activity of the enzyme.

The enzyme catalyses H2O2 + AH2 = A + 2 H2O. The catalysed reaction is 2 H2O2 = O2 + 2 H2O. Its function is as follows. Bifunctional enzyme with both catalase and broad-spectrum peroxidase activity. In Shewanella baltica (strain OS195), this protein is Catalase-peroxidase.